We begin with the raw amino-acid sequence, 705 residues long: Polyribonucleotide nucleotidyltransferase (705 aa).

Residues Asp-487 and Asp-493 each coordinate Mg(2+). A KH domain is found at 554-613 (PKILTMKINPDKIRDVIGPSGKQINKIIEDTGVKIDIEQDGTIFISSTEEDMNQKAKKII). The 69-residue stretch at 623-691 (GQLYLGKVKR…KQGRVNLSRK (69 aa)) folds into the S1 motif domain.

It belongs to the polyribonucleotide nucleotidyltransferase family. Requires Mg(2+) as cofactor.

The protein localises to the cytoplasm. The catalysed reaction is RNA(n+1) + phosphate = RNA(n) + a ribonucleoside 5'-diphosphate. Involved in mRNA degradation. Catalyzes the phosphorolysis of single-stranded polyribonucleotides processively in the 3'- to 5'-direction. This is Polyribonucleotide nucleotidyltransferase from Bacillus pumilus (strain SAFR-032).